We begin with the raw amino-acid sequence, 266 residues long: Tryptophan synthase alpha chain (266 aa).

Active-site proton acceptor residues include Glu-49 and Asp-60.

It belongs to the TrpA family. In terms of assembly, tetramer of two alpha and two beta chains.

It carries out the reaction (1S,2R)-1-C-(indol-3-yl)glycerol 3-phosphate + L-serine = D-glyceraldehyde 3-phosphate + L-tryptophan + H2O. The protein operates within amino-acid biosynthesis; L-tryptophan biosynthesis; L-tryptophan from chorismate: step 5/5. Functionally, the alpha subunit is responsible for the aldol cleavage of indoleglycerol phosphate to indole and glyceraldehyde 3-phosphate. The chain is Tryptophan synthase alpha chain from Trichormus variabilis (strain ATCC 29413 / PCC 7937) (Anabaena variabilis).